Here is a 397-residue protein sequence, read N- to C-terminus: Phosphoglycerate kinase (397 aa).

Substrate contacts are provided by residues 21-23 (DFN), R37, 60-63 (HLGR), R120, and R153. ATP contacts are provided by residues K206, G296, E327, and 353–356 (GGDS).

The protein belongs to the phosphoglycerate kinase family. In terms of assembly, monomer.

It localises to the cytoplasm. It carries out the reaction (2R)-3-phosphoglycerate + ATP = (2R)-3-phospho-glyceroyl phosphate + ADP. Its pathway is carbohydrate degradation; glycolysis; pyruvate from D-glyceraldehyde 3-phosphate: step 2/5. The polypeptide is Phosphoglycerate kinase (Rhodopirellula baltica (strain DSM 10527 / NCIMB 13988 / SH1)).